Consider the following 314-residue polypeptide: Dual specificity protein phosphatase 2 (314 aa).

The 122-residue stretch at 23–144 (EAERTLLLDC…FQGCCPDLCS (122 aa)) folds into the Rhodanese domain. The region spanning 172–313 (GPVEILPYLF…LLQFETQVLC (142 aa)) is the Tyrosine-protein phosphatase domain. The Phosphocysteine intermediate role is filled by cysteine 257.

It belongs to the protein-tyrosine phosphatase family. Non-receptor class dual specificity subfamily. Interacts with MAPK14; this interaction does not lead to catalytic activation of DUSP2 and dephosphrylation of MAPK14. As to expression, expressed in hematopoietic tissues.

The protein localises to the nucleus. It carries out the reaction O-phospho-L-tyrosyl-[protein] + H2O = L-tyrosyl-[protein] + phosphate. It catalyses the reaction O-phospho-L-threonyl-[protein] + H2O = L-threonyl-[protein] + phosphate. In terms of biological role, dephosphorylates both phosphorylated Thr and Tyr residues in MAPK1, and dephosphorylation of phosphotyrosine is slightly faster than that of phosphothreonine. Can dephosphorylate MAPK1. The protein is Dual specificity protein phosphatase 2 of Homo sapiens (Human).